The sequence spans 368 residues: Germination protease (368 aa).

A propeptide spanning residues 1 to 16 is cleaved from the precursor; it reads MKKSELDVNQYLIRTD.

This sequence belongs to the peptidase A25 family. As to quaternary structure, homotetramer. Post-translationally, autoproteolytically processed. The inactive tetrameric zymogen termed p46 autoprocesses to a smaller form termed p41, which is active only during spore germination.

It catalyses the reaction Endopeptidase action with P4 Glu or Asp, P1 preferably Glu &gt; Asp, P1' hydrophobic and P2' Ala.. Initiates the degradation of small, acid-soluble proteins during spore germination. This Bacillus subtilis (strain 168) protein is Germination protease (gpr).